The chain runs to 906 residues: Protein translocase subunit SecA (906 aa).

Residues Gln86, 104–108 (GEGKT), and Asp511 contribute to the ATP site. The span at 852 to 888 (EHESVIDNNQRHDEDEQEEAPKVKQVRREGPKVKRND) shows a compositional bias: basic and acidic residues. The segment at 852 to 906 (EHESVIDNNQRHDEDEQEEAPKVKQVRREGPKVKRNDPCPCGSGKKYKQCHSKVE) is disordered. Cys890, Cys892, Cys901, and His902 together coordinate Zn(2+). Over residues 896 to 906 (KKYKQCHSKVE) the composition is skewed to basic residues.

This sequence belongs to the SecA family. As to quaternary structure, monomer and homodimer. Part of the essential Sec protein translocation apparatus which comprises SecA, SecYEG and auxiliary proteins SecDF-YajC and YidC. Zn(2+) is required as a cofactor.

Its subcellular location is the cell inner membrane. It is found in the cytoplasm. The enzyme catalyses ATP + H2O + cellular proteinSide 1 = ADP + phosphate + cellular proteinSide 2.. Part of the Sec protein translocase complex. Interacts with the SecYEG preprotein conducting channel. Has a central role in coupling the hydrolysis of ATP to the transfer of proteins into and across the cell membrane, serving both as a receptor for the preprotein-SecB complex and as an ATP-driven molecular motor driving the stepwise translocation of polypeptide chains across the membrane. This Francisella tularensis subsp. tularensis (strain SCHU S4 / Schu 4) protein is Protein translocase subunit SecA.